The following is a 311-amino-acid chain: Ribosomal RNA small subunit methyltransferase H (311 aa).

S-adenosyl-L-methionine-binding positions include 32–34 (AGH), aspartate 52, phenylalanine 79, aspartate 100, and glutamine 107.

Belongs to the methyltransferase superfamily. RsmH family.

Its subcellular location is the cytoplasm. The enzyme catalyses cytidine(1402) in 16S rRNA + S-adenosyl-L-methionine = N(4)-methylcytidine(1402) in 16S rRNA + S-adenosyl-L-homocysteine + H(+). Specifically methylates the N4 position of cytidine in position 1402 (C1402) of 16S rRNA. This Staphylococcus aureus (strain bovine RF122 / ET3-1) protein is Ribosomal RNA small subunit methyltransferase H.